The chain runs to 802 residues: MEEEGGSSGGAAGTSADGGDGGEQLLTVKHELRTANLTGHAERVGIENFELLKVLGTGAYGKVFLVRKISGHDTGKLYAMKVLKKATIVQKAKTTEHTRTERQVLEHTRQSPFLVTLHYAFQTETKLHLILDYINGGELFTHLSQRERFTEHEVQIYVGEIVLALEHLHKLGIIYRDIKLENILLDSNGHVMLTDFGLSKEFVADETERAYSFCGTIEYMAPDIVRGGDSGHDKAVDWWSLGVLMYELLTGASPFTVDGEKNSQAEISRRILKSEPPYPQEMSALAKDLIQHLLMKDPKKRLGCGPRDADEIKEHLFFQKINWDDLAAKKVPAPFKPVIRDELDVSNFAEEFTEMDPTYSPAALPQSSEKLFQGYSFVAPSILFKRNAAVIDPLQFHMEVERPGVTNVARSAMMKDSPFYQHYDLDLKDKPLGEGSFSICRKCVHKKSNQAFAVKIISKRMEANTQKEITALKLCEGHPNIVKLHEVFHDQLHTFLVMELLNGGELFERIKKKKHFSETEASYIMRKLVSAVSHMHDVGVVHRDLKPENLLFTDENDNLEIKIIDFGFARPKPPDNQPLKTPCFTLHYAAPELLNQNGYDESCDLWSLGVILYTMLSGQVPFQSHDRSLTCTSAVEIMKKIKKGDFSFEGEAWKNVSQEAKDLIQGLLTVDPNKRLKMSGLRYNEWLQDGSQLSSNPLMTPDILGSSGAAVHTCVKATFHAFNKYKREGFCLQNVDKAPLAKRRKMKKTSTSTETRSSSSESSHSSSSHSHGKTTPTKTLQPSNPADSNNPETLFQFSDSVA.

Gly residues predominate over residues 1-22 (MEEEGGSSGGAAGTSADGGDGG). The segment at 1-23 (MEEEGGSSGGAAGTSADGGDGGE) is disordered. A Protein kinase 1 domain is found at 49 to 318 (FELLKVLGTG…ADEIKEHLFF (270 aa)). Residues 55-63 (LGTGAYGKV) and Lys81 contribute to the ATP site. Asp177 serves as the catalytic Proton acceptor. Ser212 carries the phosphoserine; by autocatalysis modification. The AGC-kinase C-terminal domain maps to 319–387 (QKINWDDLAA…VAPSILFKRN (69 aa)). Ser360 bears the Phosphoserine; by MAPK1, MAPK3 and MAPK14 mark. A phosphoserine; by autocatalysis mark is found at Ser376 and Ser381. The Protein kinase 2 domain maps to 426-687 (DLKDKPLGEG…MSGLRYNEWL (262 aa)). ATP is bound by residues 432 to 440 (LGEGSFSIC) and Lys455. Asp544 serves as the catalytic Proton acceptor. At Thr581 the chain carries Phosphothreonine; by MAPK1, MAPK3 and MAPK14. Residues Ser647, Ser657, Ser691, and Ser695 each carry the phosphoserine modification. Thr700 carries the post-translational modification Phosphothreonine; by MAPK1, MAPK3 and MAPK14. Positions 741–802 (AKRRKMKKTS…TLFQFSDSVA (62 aa)) are disordered. The span at 749–779 (TSTSTETRSSSSESSHSSSSHSHGKTTPTKT) shows a compositional bias: low complexity. Ser750, Ser752, and Ser758 each carry phosphoserine; by autocatalysis. The segment covering 780–802 (LQPSNPADSNNPETLFQFSDSVA) has biased composition (polar residues). The residue at position 798 (Ser798) is a Phosphoserine.

The protein belongs to the protein kinase superfamily. AGC Ser/Thr protein kinase family. S6 kinase subfamily. As to quaternary structure, forms a complex with either MAPK1/ERK2 or MAPK3/ERK1 in quiescent cells which transiently dissociates following mitogenic stimulation. Also associates with MAPK14/p38-alpha. Activated RPS6KA5 associates with and phosphorylates the NF-kappa-B p65 subunit RELA. Interacts with CREBBP and EP300. Requires Mg(2+) as cofactor. Post-translationally, ser-376 and Thr-581 phosphorylation is required for kinase activity. Ser-376 and Ser-212 are autophosphorylated by the C-terminal kinase domain, and their phosphorylation is essential for the catalytic activity of the N-terminal kinase domain. Phosphorylated at Ser-360, Thr-581 and Thr-700 by MAPK1/ERK2, MAPK3/ERK1 and MAPK14/p38-alpha. Autophosphorylated at Ser-750, Ser-752 and Ser-758 by the N-terminal kinase domain. In terms of processing, ubiquitinated.

It is found in the nucleus. It carries out the reaction L-seryl-[protein] + ATP = O-phospho-L-seryl-[protein] + ADP + H(+). It catalyses the reaction L-threonyl-[protein] + ATP = O-phospho-L-threonyl-[protein] + ADP + H(+). Activated by phosphorylation at Ser-360, Thr-581 and Thr-700 by MAPK1/ERK2, MAPK3/ERK1 and MAPK14/p38-alpha, and by further autophosphorylation of Ser-212, Ser-376 and Ser-381 by the activated C-terminal kinase domain. The active N-terminal kinase domain finally phosphorylates downstream substrates, as well as Ser-750, Ser-752 and Ser-758 in its own C-terminal region. Functionally, serine/threonine-protein kinase that is required for the mitogen or stress-induced phosphorylation of the transcription factors CREB1 and ATF1 and for the regulation of the transcription factors RELA, STAT3 and ETV1/ER81, and that contributes to gene activation by histone phosphorylation and functions in the regulation of inflammatory genes. Phosphorylates CREB1 and ATF1 in response to mitogenic or stress stimuli such as UV-C irradiation, epidermal growth factor (EGF) and anisomycin. Plays an essential role in the control of RELA transcriptional activity in response to TNF and upon glucocorticoid, associates in the cytoplasm with the glucocorticoid receptor NR3C1 and contributes to RELA inhibition and repression of inflammatory gene expression. In skeletal myoblasts is required for phosphorylation of RELA at 'Ser-276' during oxidative stress. In erythropoietin-stimulated cells, is necessary for the 'Ser-727' phosphorylation of STAT3 and regulation of its transcriptional potential. Phosphorylates ETV1/ER81 at 'Ser-191' and 'Ser-216', and thereby regulates its ability to stimulate transcription, which may be important during development and breast tumor formation. Directly represses transcription via phosphorylation of 'Ser-1' of histone H2A. Phosphorylates 'Ser-10' of histone H3 in response to mitogenics, stress stimuli and EGF, which results in the transcriptional activation of several immediate early genes, including proto-oncogenes c-fos/FOS and c-jun/JUN. May also phosphorylate 'Ser-28' of histone H3. Mediates the mitogen- and stress-induced phosphorylation of high mobility group protein 1 (HMGN1/HMG14). In lipopolysaccharide-stimulated primary macrophages, acts downstream of the Toll-like receptor TLR4 to limit the production of pro-inflammatory cytokines. Functions probably by inducing transcription of the MAP kinase phosphatase DUSP1 and the anti-inflammatory cytokine interleukin 10 (IL10), via CREB1 and ATF1 transcription factors. Plays a role in neuronal cell death by mediating the downstream effects of excitotoxic injury. Phosphorylates TRIM7 at 'Ser-107' in response to growth factor signaling via the MEK/ERK pathway, thereby stimulating its ubiquitin ligase activity. The chain is Ribosomal protein S6 kinase alpha-5 (RPS6KA5) from Pongo abelii (Sumatran orangutan).